The chain runs to 166 residues: UPF0254 protein Maeo_0668 (166 aa).

The protein belongs to the UPF0254 family.

In Methanococcus aeolicus (strain ATCC BAA-1280 / DSM 17508 / OCM 812 / Nankai-3), this protein is UPF0254 protein Maeo_0668.